Consider the following 132-residue polypeptide: ATP synthase epsilon chain (132 aa).

The segment covering 88–102 has biased composition (basic and acidic residues); it reads IDKERAEAARQRAQE. The disordered stretch occupies residues 88–112; sequence IDKERAEAARQRAQERLNSQSDDTD.

This sequence belongs to the ATPase epsilon chain family. F-type ATPases have 2 components, CF(1) - the catalytic core - and CF(0) - the membrane proton channel. CF(1) has five subunits: alpha(3), beta(3), gamma(1), delta(1), epsilon(1). CF(0) has three main subunits: a, b and c. The F(1)F(0) complex interacts with SpoIIIJ and YqjG; YqgA is found in the same complex.

The protein resides in the cell membrane. Produces ATP from ADP in the presence of a proton gradient across the membrane. This chain is ATP synthase epsilon chain (atpC), found in Bacillus subtilis (strain 168).